The sequence spans 251 residues: Triosephosphate isomerase (251 aa).

9-11 is a binding site for substrate; that stretch reads NWK. The active-site Electrophile is the histidine 95. Residue glutamate 167 is the Proton acceptor of the active site. Residues glycine 173, serine 213, and 234-235 contribute to the substrate site; that span reads GG.

This sequence belongs to the triosephosphate isomerase family. As to quaternary structure, homodimer.

It localises to the cytoplasm. The enzyme catalyses D-glyceraldehyde 3-phosphate = dihydroxyacetone phosphate. Its pathway is carbohydrate biosynthesis; gluconeogenesis. The protein operates within carbohydrate degradation; glycolysis; D-glyceraldehyde 3-phosphate from glycerone phosphate: step 1/1. Functionally, involved in the gluconeogenesis. Catalyzes stereospecifically the conversion of dihydroxyacetone phosphate (DHAP) to D-glyceraldehyde-3-phosphate (G3P). In Latilactobacillus sakei subsp. sakei (strain 23K) (Lactobacillus sakei subsp. sakei), this protein is Triosephosphate isomerase.